We begin with the raw amino-acid sequence, 1061 residues long: WNGPDELELEISSTDGVGHIRARNQLHKGFSWGPYKGNFTGSSSSPGPADLNISPSWDVDGDCWLKYVTLVSCEAEANAVLYRKGDLIWCKTSQIVEQDEVIQAFLKAEPQAIPNYTIKEEPGETSQCTSTLPEFQLLPQQAGMAAILATAVVNKDVFPCKDCGIWYRSERNLQAHLMYYCASRQSSTSPSMEEKAKDSYPNERICPFPQCKKSCPSTSSLEIHMRSHSGERPFVCLICLSAFTTKANCERHLKVHTDTLNGVCHGCGFISTTRDILYSHLVTNHMICQPGSKVDVYPVVKAVPAVKSSNPVVSQIASSSLLKCGLCGFLAEDFQVFNHALLHTTNPVPSATHSVKSPPENINEKQNPESQENGNAKSPISSSSSASSRSEETPLKLYIKQEPEGQLSISEAGSTTCEAKDGVALVQSPAIKVKTEMSSPTPGSSPVPNETGAATGGGTVIIPHYVFGHEATAAIVPQASEILAKMSELVHSRLKQGQAVTPAGFSGSAVPKGATCFECEITFNNINNYYVHKRLYCSGRHVSDENSSSARKVKALPARTALASGFSSTEQEASPPQEDAGEESSAPVVAVKLEENSGMDCEGAGSGHVSEGSQSPSSLDDPEEDPNRTVCGACNIRFSRHETYVVHKRYYCASRHDPPLRRREVNKPGPPYTTQPTPRTRKRRKLYEIHGVAPTESTPPSPHTLGRVEAMALMPGLIPAPVMPSPSSSPDAVDGPIDLSKKPRLVAEAPVPSAAATVAPLADYHECTACRISFNSLESYLAHKKFSCPTAPLQQKTIQQLQKVKSPSSATGKLVDDTVKVKVESKAALSPGSVSDTIQPLALPFSTISDPKQLQQYSSVTEASLSATTTCPYCPHNVIIRGDLLEHFRSVHGLILAKPTAGHRLQTTIMEVLVPARGQTSSASENSLPSPPVSSASPLQLPGLRRENSNYKDTTSSSSSVNGSPILTSTPRPLLPTSPAPPSNSLPLAESRREDGLPRVPSQVLLPGDKAMQPPKPSLISPVPNGNHRYCRLCNIKFSSLSTFIAHKKYYCSSHAAEHVK.

Residues 152-185 (VVNKDVFPCKDCGIWYRSERNLQAHLMYYCASRQ) form a CCHC FOG-type 1 zinc finger. Zn(2+) is bound by residues C160, C163, H176, and C181. 3 C2H2-type zinc fingers span residues 204-228 (RICP…MRSH), 234-256 (FVCL…LKVH), and 262-285 (GVCH…VTNH). 2 disordered regions span residues 349–393 (PSAT…SEET) and 435–455 (TEMS…GAAT). The span at 378–388 (SPISSSSSASS) shows a compositional bias: low complexity. The span at 436-448 (EMSSPTPGSSPVP) shows a compositional bias: polar residues. Residues 508-541 (SAVPKGATCFECEITFNNINNYYVHKRLYCSGRH) form a CCHC FOG-type 2 zinc finger. Residues C516, C519, H532, and C537 each contribute to the Zn(2+) site. Disordered regions lie at residues 561–586 (ALAS…ESSA) and 599–630 (MDCE…NRTV). Positions 565 to 574 (GFSSTEQEAS) are enriched in polar residues. The CCHC FOG-type 3 zinc-finger motif lies at 623 to 656 (EEDPNRTVCGACNIRFSRHETYVVHKRYYCASRH). Zn(2+)-binding residues include C631, C634, H647, and C652. Residues 661–681 (RRREVNKPGPPYTTQPTPRTR) form a disordered region. Residues 736–742 (PIDLSKK) are interaction with CTBP. The CCHC FOG-type 4 zinc-finger motif lies at 759–792 (APLADYHECTACRISFNSLESYLAHKKFSCPTAP). Zn(2+) contacts are provided by C767, C770, H783, and C788. The C2H2-type 4 zinc-finger motif lies at 869–892 (TTCPYCPHNVIIRGDLLEHFRSVH). Positions 917–1021 (RGQTSSASEN…MQPPKPSLIS (105 aa)) are disordered. Composition is skewed to low complexity over residues 933–942 (VSSASPLQLP) and 954–972 (TTSS…STPR). A compositionally biased stretch (pro residues) spans 973-984 (PLLPTSPAPPSN). The CCHC FOG-type 5 zinc-finger motif lies at 1023 to 1056 (VPNGNHRYCRLCNIKFSSLSTFIAHKKYYCSSHA). Residues C1031, C1034, H1047, and C1052 each coordinate Zn(2+).

Belongs to the FOG (Friend of GATA) family. Interacts with corepressor CTBP. Interacts with the N-terminal zinc-finger of GATA1 and probably GATA2. In terms of tissue distribution, predominantly expressed in heart and brain. Also expressed in ventral blood island and adult spleen.

The protein resides in the nucleus. Functionally, transcription regulator that plays an central role in red blood cell differentiation. Essential cofactor that acts via the formation of a heterodimer with transcription factors of the GATA family GATA1 and GATA2. Such heterodimer can both activate or repress transcriptional activity, depending on the cell and promoter context. Acts as a repressor of red blood cells, probably by modulating activity of GATA1. This is Zinc finger protein ZFPM1 (zfpm1) from Xenopus laevis (African clawed frog).